Here is a 632-residue protein sequence, read N- to C-terminus: Golgin subfamily A member 8M (632 aa).

The interval 1–77 (MAEETQHNKL…SSATLKDLES (77 aa)) is disordered. Residues 38–50 (TNGSIPQTATSGG) are compositionally biased toward polar residues. 2 coiled-coil regions span residues 86–154 (LDSR…HMKR) and 209–421 (KLEQ…SLMA). Positions 352-362 (KQEERIQEQHK) are enriched in basic and acidic residues. 3 disordered regions span residues 352–384 (KQEE…NKST), 422–456 (LPGE…REAM), and 505–524 (DAAL…DEGE). The segment covering 508–520 (LGGGHHQAGAQGG) has biased composition (gly residues).

The protein belongs to the GOLGA8 family.

The protein is Golgin subfamily A member 8M of Homo sapiens (Human).